The sequence spans 253 residues: Putative enoyl-CoA hydratase (253 aa).

Glutamate 131 is a catalytic residue.

Belongs to the enoyl-CoA hydratase/isomerase family. In terms of assembly, homohexamer; dimer of trimers.

The catalysed reaction is a (3S)-3-hydroxyacyl-CoA = a (2E)-enoyl-CoA + H2O. The protein is Putative enoyl-CoA hydratase of Thermus thermophilus (strain ATCC 27634 / DSM 579 / HB8).